The primary structure comprises 452 residues: Cysteine--tRNA ligase (452 aa).

Residue cysteine 27 coordinates Zn(2+). The 'HIGH' region signature appears at 29-39; sequence PTVQDHFHIGH. Zn(2+)-binding residues include aspartate 207, histidine 232, and glutamate 236. Positions 265 to 269 match the 'KMSKS' region motif; sequence KMSKS. Lysine 268 lines the ATP pocket.

This sequence belongs to the class-I aminoacyl-tRNA synthetase family. Zn(2+) is required as a cofactor.

It localises to the cytoplasm. The enzyme catalyses tRNA(Cys) + L-cysteine + ATP = L-cysteinyl-tRNA(Cys) + AMP + diphosphate. The sequence is that of Cysteine--tRNA ligase from Thermoplasma acidophilum (strain ATCC 25905 / DSM 1728 / JCM 9062 / NBRC 15155 / AMRC-C165).